The sequence spans 577 residues: 9-cis-epoxycarotenoid dioxygenase NCED6, chloroplastic (577 aa).

The disordered stretch occupies residues 1–25 (MQHSLRSDLLPTKTSPRSHLLPQPK). H276, H325, H390, and H563 together coordinate Fe cation.

This sequence belongs to the carotenoid oxygenase family. The cofactor is Fe(2+). Expressed before fertilization in male and female gametophytes, and then immediately after pollination, restricted to seed endosperm.

Its subcellular location is the plastid. It localises to the chloroplast stroma. It catalyses the reaction a 9-cis-epoxycarotenoid + O2 = a 12'-apo-carotenal + 2-cis,4-trans-xanthoxin. The enzyme catalyses 9-cis-violaxanthin + O2 = (3S,5R,6S)-5,6-epoxy-3-hydroxy-5,6-dihydro-12'-apo-beta-caroten-12'-al + 2-cis,4-trans-xanthoxin. The catalysed reaction is 9'-cis-neoxanthin + O2 = (3S,5R,6R)-3,5-dihydroxy-6,7-didehydro-5,6-dihydro-12'-apo-beta-caroten-12'-al + 2-cis,4-trans-xanthoxin. Functionally, has a 11,12(11',12') 9-cis epoxycarotenoid cleavage activity. Catalyzes the first step of abscisic-acid biosynthesis from carotenoids. Contributes probably to abscisic acid synthesis for the induction of seed dormancy. The sequence is that of 9-cis-epoxycarotenoid dioxygenase NCED6, chloroplastic (NCED6) from Arabidopsis thaliana (Mouse-ear cress).